The primary structure comprises 268 residues: Tropinone reductase homolog At2g29150 (268 aa).

Residue 22–46 (LVTGGSKGLGEAVVEELAMLGARVH) participates in NADP(+) binding. S155 lines the substrate pocket. Y167 functions as the Proton acceptor in the catalytic mechanism.

This sequence belongs to the short-chain dehydrogenases/reductases (SDR) family. SDR65C subfamily.

Its function is as follows. Enantiospecific reductase active on cyclic monoterpenes and small flexible lipophilic carbonyls. No activity with tropinone, nitrogen-containing tropinone analogs, tropine or pseudotropine as substrate. This chain is Tropinone reductase homolog At2g29150, found in Arabidopsis thaliana (Mouse-ear cress).